A 209-amino-acid chain; its full sequence is Dual specificity protein phosphatase 22 (209 aa).

One can recognise a Tyrosine-protein phosphatase domain in the interval 4–144 (GMNKILTGLF…LEDFGKCEVH (141 aa)). C88 functions as the Phosphocysteine intermediate in the catalytic mechanism. The interval 169-192 (LDKHKQQEAAESQNATSSGRQWNS) is disordered. Positions 177 to 190 (AAESQNATSSGRQW) are enriched in polar residues.

The protein belongs to the protein-tyrosine phosphatase family. Non-receptor class dual specificity subfamily.

It is found in the cytoplasm. Its subcellular location is the nucleus. It carries out the reaction O-phospho-L-tyrosyl-[protein] + H2O = L-tyrosyl-[protein] + phosphate. It catalyses the reaction O-phospho-L-seryl-[protein] + H2O = L-seryl-[protein] + phosphate. The catalysed reaction is O-phospho-L-threonyl-[protein] + H2O = L-threonyl-[protein] + phosphate. Functionally, activates the Jnk signaling pathway. Dephosphorylates and deactivates p38 and stress-activated protein kinase/c-Jun N-terminal kinase (SAPK/JNK). This is Dual specificity protein phosphatase 22 (dusp22) from Xenopus laevis (African clawed frog).